We begin with the raw amino-acid sequence, 78 residues long: DNA-directed RNA polymerase subunit Rpo5 (78 aa).

This sequence belongs to the archaeal Rpo5/eukaryotic RPB5 RNA polymerase subunit family. As to quaternary structure, part of the RNA polymerase complex.

Its subcellular location is the cytoplasm. It catalyses the reaction RNA(n) + a ribonucleoside 5'-triphosphate = RNA(n+1) + diphosphate. Its function is as follows. DNA-dependent RNA polymerase (RNAP) catalyzes the transcription of DNA into RNA using the four ribonucleoside triphosphates as substrates. In Methanosarcina acetivorans (strain ATCC 35395 / DSM 2834 / JCM 12185 / C2A), this protein is DNA-directed RNA polymerase subunit Rpo5.